A 105-amino-acid polypeptide reads, in one-letter code: MAPIKTQESINQKLALVVKSGKFTLGYKSTIKSLRQGKSKLIIIAANTPVLRKSELEYYAMLSKTKVYYFQGGNNELGTAVGKLFRVGVVSVLDAGDSDILTALA.

It belongs to the eukaryotic ribosomal protein eL30 family.

In Candida glabrata (strain ATCC 2001 / BCRC 20586 / JCM 3761 / NBRC 0622 / NRRL Y-65 / CBS 138) (Yeast), this protein is Large ribosomal subunit protein eL30 (RPL30).